Reading from the N-terminus, the 83-residue chain is Molybdopterin synthase sulfur carrier subunit (83 aa).

It belongs to the MoaD family.

The protein operates within cofactor biosynthesis; molybdopterin biosynthesis. Involved in sulfur transfer in the conversion of molybdopterin precursor Z to molybdopterin. Probably plays a role in host phagosome maturation arrest. The protein is Molybdopterin synthase sulfur carrier subunit (moaD1) of Mycobacterium tuberculosis (strain ATCC 25618 / H37Rv).